Here is a 133-residue protein sequence, read N- to C-terminus: ATP synthase epsilon chain, chloroplastic (133 aa).

The protein belongs to the ATPase epsilon chain family. In terms of assembly, F-type ATPases have 2 components, CF(1) - the catalytic core - and CF(0) - the membrane proton channel. CF(1) has five subunits: alpha(3), beta(3), gamma(1), delta(1), epsilon(1). CF(0) has three main subunits: a, b and c.

It is found in the plastid. Its subcellular location is the chloroplast thylakoid membrane. Its function is as follows. Produces ATP from ADP in the presence of a proton gradient across the membrane. The chain is ATP synthase epsilon chain, chloroplastic from Ipomoea batatas (Sweet potato).